The chain runs to 368 residues: Endophilin-A2 (368 aa).

The tract at residues 1–21 (MSVAGLKKQFYKASQLVSEKV) is membrane-binding amphipathic helix. The region spanning 18 to 249 (SEKVGGAEGT…LKRRVREASS (232 aa)) is the BAR domain. The tract at residues 60–87 (PNPASRAKLTMLNTVSKIRGQVKNPGYP) is required for dimerization upon membrane association. The stretch at 180–250 (DEELRQALEK…KRRVREASSR (71 aa)) forms a coiled coil. The segment at 218–254 (LVDAQLDYHRQAVQILEELADKLKRRVREASSRPKRE) is interaction with ARC. The tract at residues 244-307 (VREASSRPKR…MPSKSMPPLD (64 aa)) is disordered. The segment covering 245–263 (REASSRPKREFKPRPREPF) has biased composition (basic and acidic residues). 2 positions are modified to phosphoserine: Ser-288 and Ser-292. The region spanning 306–365 (LDQPSCKALYDFEPENDGELGFREGDLITLTNQIDENWYEGMLHGQSGFFPLSYVQVLVP) is the SH3 domain. At Tyr-315 the chain carries Phosphotyrosine.

This sequence belongs to the endophilin family. Interacts with ARC, SYNJ1 and DNM1. Interacts with PDCD6IP. Interacts with BIN2.

The protein resides in the cytoplasm. Its subcellular location is the early endosome membrane. It localises to the cell projection. The protein localises to the podosome. Functionally, implicated in endocytosis. May recruit other proteins to membranes with high curvature. The polypeptide is Endophilin-A2 (Sh3gl1) (Mus musculus (Mouse)).